The primary structure comprises 318 residues: Homeobox-leucine zipper protein ATHB-4 (318 aa).

Disordered regions lie at residues 1-23 (MGER…KEPS) and 128-165 (ARGG…RKKL). Residues 8–17 (LGLSLSLGNS) show a composition bias toward low complexity. Positions 128–140 (ARGGDENEAERAS) are enriched in basic and acidic residues. Residues 160 to 219 (GSRKKLRLSKDQALVLEETFKEHSTLNPKQKLALAKQLNLRARQVEVWFQNRRARTKLKQ) constitute a DNA-binding region (homeobox). The leucine-zipper stretch occupies residues 227–248 (LKRCCDNLTEENRRLQKEVSEL).

The protein belongs to the HD-ZIP homeobox family. Class II subfamily.

Its subcellular location is the nucleus. Its function is as follows. Probable transcription factor. In Arabidopsis thaliana (Mouse-ear cress), this protein is Homeobox-leucine zipper protein ATHB-4 (ATHB-4).